We begin with the raw amino-acid sequence, 95 residues long: uncharacterized protein (95 aa).

The disordered stretch occupies residues 65–95; it reads DANDYDTTTTEEEDSSTTTTTDNETNSDDDI.

This is an uncharacterized protein from Lymantria dispar multicapsid nuclear polyhedrosis virus (LdMNPV).